A 491-amino-acid polypeptide reads, in one-letter code: Histamine H1 receptor (491 aa).

The Extracellular portion of the chain corresponds to 1–30 (MTCPNSSCVFEDKMCQGNKTAPANDAQLTP). 2 N-linked (GlcNAc...) asparagine glycosylation sites follow: asparagine 5 and asparagine 18. A helical transmembrane segment spans residues 31-51 (LVVVLSTISLVTVGLNLLVLY). Topologically, residues 52 to 65 (AVRSERKLHTVGNL) are cytoplasmic. Residues 66–90 (YIVSLSVADLIVGVVVMPMNILYLL) traverse the membrane as a helical segment. Residues 91–98 (MSRWSLGR) lie on the Extracellular side of the membrane. The chain crosses the membrane as a helical span at residues 99-124 (PLCLFWLSMDYVASTASIFSVFILCI). A disulfide bridge connects residues cysteine 101 and cysteine 181. Histamine is bound by residues aspartate 108 and threonine 113. The segment at 108 to 113 (DYVAST) is important for agonist binding. Residues 125–145 (DRYRSVQQPLKYLRYRTKTRA) lie on the Cytoplasmic side of the membrane. Phosphothreonine is present on residues threonine 141 and threonine 143. The helical transmembrane segment at 146–165 (SITILAAWFLSFLWIIPILG) threads the bilayer. Topologically, residues 166–189 (WRHFQPKTPEPREDKCETDFYNVT) are extracellular. A helical transmembrane segment spans residues 190 to 212 (WFKVMTAIINFYLPTLLMLWFYA). Histamine is bound at residue asparagine 199. At 213 to 420 (KIYKAVRQHC…MNRERKAAKQ (208 aa)) the chain is on the cytoplasmic side. Serine 231 is modified (phosphoserine). Disordered regions lie at residues 246–297 (QVGA…KEEK) and 360–385 (QSFS…SESS). Basic and acidic residues predominate over residues 252–262 (PGKESPWEVLK). 3 positions are modified to phosphoserine: serine 384, serine 400, and serine 402. The helical transmembrane segment at 421 to 444 (LGFIMAAFIICWIPYFIFFMVIAF) threads the bilayer. The segment at 428–432 (FIICW) is important for agonist binding. Tyrosine 435 lines the histamine pocket. Cysteine 445 and cysteine 448 are joined by a disulfide. Residues 445 to 450 (CESCCN) are Extracellular-facing. The helical transmembrane segment at 451–473 (QHVHMFTIWLGYINSTLNPLIYP) threads the bilayer. At 474–491 (LCNENFKKTFKKILHIRS) the chain is on the cytoplasmic side.

The protein belongs to the G-protein coupled receptor 1 family. In terms of processing, phosphorylation at sites in the second and third cytoplasmic loops independently contribute to agonist-induced receptor down-regulation. In terms of tissue distribution, brain, lung, small intestine, uterus, adrenal medulla and spleen.

Its subcellular location is the cell membrane. In terms of biological role, G-protein-coupled receptor for histamine, a biogenic amine that functions as an immune modulator and a neurotransmitter. Through the H1 receptor, histamine mediates the contraction of smooth muscles and increases capillary permeability due to contraction of terminal venules. Also mediates neurotransmission in the central nervous system and thereby regulates circadian rhythms, emotional and locomotor activities as well as cognitive functions. This is Histamine H1 receptor from Bos taurus (Bovine).